Reading from the N-terminus, the 314-residue chain is Protoheme IX farnesyltransferase (314 aa).

A run of 8 helical transmembrane segments spans residues 36 to 56, 65 to 85, 114 to 134, 135 to 155, 179 to 199, 237 to 257, 259 to 279, and 290 to 310; these read IGIV…AISF, WGTF…GCIV, SVLT…MFTS, WYAT…YTIW, WAAI…IMFI, IIVY…TMGI, FAVI…TGLF, and IFIF…IVKL.

This sequence belongs to the UbiA prenyltransferase family. Protoheme IX farnesyltransferase subfamily. In terms of assembly, interacts with CtaA.

Its subcellular location is the cell membrane. The catalysed reaction is heme b + (2E,6E)-farnesyl diphosphate + H2O = Fe(II)-heme o + diphosphate. It functions in the pathway porphyrin-containing compound metabolism; heme O biosynthesis; heme O from protoheme: step 1/1. In terms of biological role, converts heme B (protoheme IX) to heme O by substitution of the vinyl group on carbon 2 of heme B porphyrin ring with a hydroxyethyl farnesyl side group. The sequence is that of Protoheme IX farnesyltransferase from Oceanobacillus iheyensis (strain DSM 14371 / CIP 107618 / JCM 11309 / KCTC 3954 / HTE831).